Here is a 1188-residue protein sequence, read N- to C-terminus: DNA-directed RNA polymerase subunit beta (1188 aa).

The disordered stretch occupies residues Glu1149 to Lys1188. Positions Val1161 to Ala1175 are enriched in basic and acidic residues.

It belongs to the RNA polymerase beta chain family. In terms of assembly, the RNAP catalytic core consists of 2 alpha, 1 beta, 1 beta' and 1 omega subunit. When a sigma factor is associated with the core the holoenzyme is formed, which can initiate transcription.

The catalysed reaction is RNA(n) + a ribonucleoside 5'-triphosphate = RNA(n+1) + diphosphate. Its function is as follows. DNA-dependent RNA polymerase catalyzes the transcription of DNA into RNA using the four ribonucleoside triphosphates as substrates. The protein is DNA-directed RNA polymerase subunit beta of Streptococcus uberis (strain ATCC BAA-854 / 0140J).